Consider the following 370-residue polypeptide: UDP-N-acetylglucosamine--N-acetylmuramyl-(pentapeptide) pyrophosphoryl-undecaprenol N-acetylglucosamine transferase (370 aa).

UDP-N-acetyl-alpha-D-glucosamine is bound by residues 20 to 22 (TAG), N134, R170, S204, I257, and Q301.

This sequence belongs to the glycosyltransferase 28 family. MurG subfamily.

The protein localises to the cell membrane. The catalysed reaction is di-trans,octa-cis-undecaprenyl diphospho-N-acetyl-alpha-D-muramoyl-L-alanyl-D-glutamyl-meso-2,6-diaminopimeloyl-D-alanyl-D-alanine + UDP-N-acetyl-alpha-D-glucosamine = di-trans,octa-cis-undecaprenyl diphospho-[N-acetyl-alpha-D-glucosaminyl-(1-&gt;4)]-N-acetyl-alpha-D-muramoyl-L-alanyl-D-glutamyl-meso-2,6-diaminopimeloyl-D-alanyl-D-alanine + UDP + H(+). It functions in the pathway cell wall biogenesis; peptidoglycan biosynthesis. Cell wall formation. Catalyzes the transfer of a GlcNAc subunit on undecaprenyl-pyrophosphoryl-MurNAc-pentapeptide (lipid intermediate I) to form undecaprenyl-pyrophosphoryl-MurNAc-(pentapeptide)GlcNAc (lipid intermediate II). This chain is UDP-N-acetylglucosamine--N-acetylmuramyl-(pentapeptide) pyrophosphoryl-undecaprenol N-acetylglucosamine transferase, found in Corynebacterium jeikeium (strain K411).